Reading from the N-terminus, the 161-residue chain is Large ribosomal subunit protein uL10 (161 aa).

Belongs to the universal ribosomal protein uL10 family. In terms of assembly, part of the ribosomal stalk of the 50S ribosomal subunit. The N-terminus interacts with L11 and the large rRNA to form the base of the stalk. The C-terminus forms an elongated spine to which L12 dimers bind in a sequential fashion forming a multimeric L10(L12)X complex.

In terms of biological role, forms part of the ribosomal stalk, playing a central role in the interaction of the ribosome with GTP-bound translation factors. In Wigglesworthia glossinidia brevipalpis, this protein is Large ribosomal subunit protein uL10 (rplJ).